Reading from the N-terminus, the 676-residue chain is UvrABC system protein B (676 aa).

In terms of domain architecture, Helicase ATP-binding spans 35–192 (QGVADGLMYQ…ARLVAMQYTR (158 aa)). 48 to 55 (GVTGSGKT) serves as a coordination point for ATP. A Beta-hairpin motif is present at residues 101-124 (YYDYYQPEAYVPTRDLFIEKDSSV). The region spanning 439 to 605 (QVDDLLGEIR…GVNKAVRELI (167 aa)) is the Helicase C-terminal domain. Residues 634–669 (AREIKRLEKLMMDHARNLEFEQAAAARDALTALKNR) enclose the UVR domain.

It belongs to the UvrB family. In terms of assembly, forms a heterotetramer with UvrA during the search for lesions. Interacts with UvrC in an incision complex.

Its subcellular location is the cytoplasm. In terms of biological role, the UvrABC repair system catalyzes the recognition and processing of DNA lesions. A damage recognition complex composed of 2 UvrA and 2 UvrB subunits scans DNA for abnormalities. Upon binding of the UvrA(2)B(2) complex to a putative damaged site, the DNA wraps around one UvrB monomer. DNA wrap is dependent on ATP binding by UvrB and probably causes local melting of the DNA helix, facilitating insertion of UvrB beta-hairpin between the DNA strands. Then UvrB probes one DNA strand for the presence of a lesion. If a lesion is found the UvrA subunits dissociate and the UvrB-DNA preincision complex is formed. This complex is subsequently bound by UvrC and the second UvrB is released. If no lesion is found, the DNA wraps around the other UvrB subunit that will check the other stand for damage. The protein is UvrABC system protein B of Bordetella avium (strain 197N).